Reading from the N-terminus, the 344-residue chain is MNNAIILGIIWHLVGAASAACFYAPFKQVKKWSWETMWSIGGLVSWLILPWTVSYLLLPDFWQYYGSFSIATLLPVFLFGAMWGIGNINYGLTMRYLGMSMGIGIAIGITLIIGTLMTPILQGRFDVLLGTPGGRMTLLGVFVALIGVAIVSYAGLLKERAMGIQAEEFNLKKGLILAVMCGIFSAGMSFAMDAAKPMHEAASALGINSLYVALPSYVIIMGGGAIINLSYCFIRLATLKNLSVKADFSVAKPLLITNILFSALAGLMWYLQFFFYAWGHAKIPQQYDYMSWMLHMSFYVLCGGIVGLLLKEWKCSTKKPVAVLCIGCLVIILAANIVGLGMAA.

The next 10 helical transmembrane spans lie at 4 to 24 (AIIL…CFYA), 38 to 58 (WSIG…YLLL), 68 to 88 (FSIA…IGNI), 101 to 121 (MGIG…TPIL), 137 to 157 (TLLG…AGLL), 175 to 195 (LILA…MDAA), 207 to 227 (INSL…GAII), 259 to 279 (ILFS…YAWG), 290 to 310 (MSWM…GLLL), and 321 to 341 (VAVL…VGLG).

The protein belongs to the L-rhamnose transporter (TC 2.A.7.6) family.

It localises to the cell inner membrane. It carries out the reaction L-rhamnopyranose(in) + H(+)(in) = L-rhamnopyranose(out) + H(+)(out). In terms of biological role, uptake of L-rhamnose across the cytoplasmic membrane with the concomitant transport of protons into the cell (symport system). The polypeptide is L-rhamnose-proton symporter (Yersinia pseudotuberculosis serotype O:1b (strain IP 31758)).